The sequence spans 266 residues: Mitochondrial S-adenosylmethionine carrier protein (266 aa).

Solcar repeat units follow at residues 4 to 77, 85 to 167, and 176 to 264; these read RELC…AKRF, LSPI…LKNL, and VDCW…VRSS. The next 6 membrane-spanning stretches (helical) occupy residues 5–25, 49–69, 84–104, 141–161, 181–201, and 237–257; these read ELCA…LILF, IYAG…AFFV, YLSP…ACLI, RGYK…FPLW, SAVC…PLDV, and FAGV…FLGA.

It belongs to the mitochondrial carrier (TC 2.A.29) family.

Its subcellular location is the mitochondrion inner membrane. The catalysed reaction is S-adenosyl-L-homocysteine(out) + S-adenosyl-L-methionine(in) = S-adenosyl-L-homocysteine(in) + S-adenosyl-L-methionine(out). Its function is as follows. Mitochondrial S-adenosyl-L-methionine/S-adenosyl-L-homocysteine antiporter. Mediates the exchange of cytosolic S-adenosyl-L-methionine, the predominant methyl-group donor for macromolecule methylation processes, for mitochondrial S-adenosylhomocysteine(SAH), a by-product of methylation reactions. The sequence is that of Mitochondrial S-adenosylmethionine carrier protein (slc25a26) from Xenopus laevis (African clawed frog).